We begin with the raw amino-acid sequence, 165 residues long: ATP synthase subunit b (165 aa).

The helical transmembrane segment at 5 to 27 threads the bilayer; sequence INSTTLGNIIITLGSVFLLYYLI.

The protein belongs to the ATPase B chain family. In terms of assembly, F-type ATPases have 2 components, F(1) - the catalytic core - and F(0) - the membrane proton channel. F(1) has five subunits: alpha(3), beta(3), gamma(1), delta(1), epsilon(1). F(0) has three main subunits: a(1), b(2) and c(10-14). The alpha and beta chains form an alternating ring which encloses part of the gamma chain. F(1) is attached to F(0) by a central stalk formed by the gamma and epsilon chains, while a peripheral stalk is formed by the delta and b chains.

The protein localises to the cell membrane. Functionally, f(1)F(0) ATP synthase produces ATP from ADP in the presence of a proton or sodium gradient. F-type ATPases consist of two structural domains, F(1) containing the extramembraneous catalytic core and F(0) containing the membrane proton channel, linked together by a central stalk and a peripheral stalk. During catalysis, ATP synthesis in the catalytic domain of F(1) is coupled via a rotary mechanism of the central stalk subunits to proton translocation. Component of the F(0) channel, it forms part of the peripheral stalk, linking F(1) to F(0). The polypeptide is ATP synthase subunit b (Streptococcus thermophilus (strain CNRZ 1066)).